The sequence spans 214 residues: Alpha-S1-casein (214 aa).

The N-terminal stretch at 1–15 (MKLLILTCLVAVALA) is a signal peptide. Phosphoserine occurs at positions 63, 79, 81, 82, 83, and 90. Repeats lie at residues 85–99 (EIVP…IQKE) and 125–140 (EIVP…SMKE).

Belongs to the alpha-casein family. Mammary gland specific. Secreted in milk.

The protein resides in the secreted. Its function is as follows. Important role in the capacity of milk to transport calcium phosphate. The polypeptide is Alpha-S1-casein (CSN1S1) (Bubalus bubalis (Domestic water buffalo)).